The chain runs to 621 residues: Glutathione-regulated potassium-efflux system protein KefC (621 aa).

Transmembrane regions (helical) follow at residues 4–24, 26–46, 54–74, 90–110, 114–134, 151–171, 178–198, 218–238, 270–290, 294–314, 327–347, and 359–379; these read HTLI…PVAV, LGLG…PWGF, SILH…GLEL, GALQ…LLGM, VAEL…MQAM, VLLF…LLAV, LGAF…VILL, VFSA…EEAG, GLLL…GTLV, LRIL…LWLI, WFAV…GAAQ, and ALTL…VLLT. An RCK N-terminal domain is found at 399 to 518; sequence QPRVIIAGFG…AGVETPERET (120 aa). Residues 591-621 are disordered; the sequence is LSLTQRHGWQGTEEGKHTGDPRDEPESKPTV. Positions 603–621 are enriched in basic and acidic residues; it reads EEGKHTGDPRDEPESKPTV.

Belongs to the monovalent cation:proton antiporter 2 (CPA2) transporter (TC 2.A.37) family. KefC subfamily. In terms of assembly, homodimer. Interacts with the regulatory subunit KefF.

The protein resides in the cell inner membrane. Functionally, pore-forming subunit of a potassium efflux system that confers protection against electrophiles. Catalyzes K(+)/H(+) antiport. This chain is Glutathione-regulated potassium-efflux system protein KefC, found in Enterobacter sp. (strain 638).